Here is a 630-residue protein sequence, read N- to C-terminus: Mitochondrial Rho GTPase 1 (630 aa).

In terms of domain architecture, Miro 1 spans 1–168; the sequence is MKEVRVVICG…FYMCRACVIY (168 aa). Over 1–598 the chain is Cytoplasmic; that stretch reads MKEVRVVICG…EEDSNKTNYQ (598 aa). Residues 10–17, 57–61, and 113–116 contribute to the GTP site; these read GDQGVGKS, DTQSD, and NKSE. 2 consecutive EF-hand domains span residues 184–219 and 304–339; these read ATIH…CFSK and KGYR…TPGL. D197, N199, D201, E208, D317, D319, D321, and E328 together coordinate Ca(2+). One can recognise a Miro 2 domain in the interval 419 to 579; sequence RNVFLCFVVG…FIQLAESAQY (161 aa). Residues 428 to 435, 459 to 463, and 527 to 530 each bind GTP; these read GSKSCGKT, EFQST, and TKAD. Residues 599–619 traverse the membrane as a helical; Anchor for type IV membrane protein segment; the sequence is LVAALTAFGALLLSVGGSLTW. Over 620–630 the chain is Mitochondrial intermembrane; it reads KIIKHQYYSKK.

This sequence belongs to the mitochondrial Rho GTPase family.

Its subcellular location is the mitochondrion outer membrane. In terms of biological role, mitochondrial GTPase involved in mitochondrial trafficking. Probably involved in control of anterograde transport of mitochondria and their subcellular distribution. This is Mitochondrial Rho GTPase 1 (gem1) from Schizosaccharomyces pombe (strain 972 / ATCC 24843) (Fission yeast).